We begin with the raw amino-acid sequence, 389 residues long: Glutamate 5-kinase (389 aa).

Lys17 contacts ATP. Substrate-binding residues include Ser57, Asp144, and Asn156. 176–177 (SD) serves as a coordination point for ATP. Residues 282–359 (AGEIHVDAGA…NEIETILGYV (78 aa)) enclose the PUA domain.

It belongs to the glutamate 5-kinase family.

It localises to the cytoplasm. It carries out the reaction L-glutamate + ATP = L-glutamyl 5-phosphate + ADP. Its pathway is amino-acid biosynthesis; L-proline biosynthesis; L-glutamate 5-semialdehyde from L-glutamate: step 1/2. Catalyzes the transfer of a phosphate group to glutamate to form L-glutamate 5-phosphate. The polypeptide is Glutamate 5-kinase (Agrobacterium fabrum (strain C58 / ATCC 33970) (Agrobacterium tumefaciens (strain C58))).